Reading from the N-terminus, the 170-residue chain is Adenine phosphoribosyltransferase (170 aa).

It belongs to the purine/pyrimidine phosphoribosyltransferase family. As to quaternary structure, homodimer.

The protein resides in the cytoplasm. The catalysed reaction is AMP + diphosphate = 5-phospho-alpha-D-ribose 1-diphosphate + adenine. It participates in purine metabolism; AMP biosynthesis via salvage pathway; AMP from adenine: step 1/1. Catalyzes a salvage reaction resulting in the formation of AMP, that is energically less costly than de novo synthesis. The sequence is that of Adenine phosphoribosyltransferase from Trichodesmium erythraeum (strain IMS101).